The following is a 479-amino-acid chain: Aspartyl/glutamyl-tRNA(Asn/Gln) amidotransferase subunit B (479 aa).

Belongs to the GatB/GatE family. GatB subfamily. As to quaternary structure, heterotrimer of A, B and C subunits.

The enzyme catalyses L-glutamyl-tRNA(Gln) + L-glutamine + ATP + H2O = L-glutaminyl-tRNA(Gln) + L-glutamate + ADP + phosphate + H(+). It carries out the reaction L-aspartyl-tRNA(Asn) + L-glutamine + ATP + H2O = L-asparaginyl-tRNA(Asn) + L-glutamate + ADP + phosphate + 2 H(+). Functionally, allows the formation of correctly charged Asn-tRNA(Asn) or Gln-tRNA(Gln) through the transamidation of misacylated Asp-tRNA(Asn) or Glu-tRNA(Gln) in organisms which lack either or both of asparaginyl-tRNA or glutaminyl-tRNA synthetases. The reaction takes place in the presence of glutamine and ATP through an activated phospho-Asp-tRNA(Asn) or phospho-Glu-tRNA(Gln). This is Aspartyl/glutamyl-tRNA(Asn/Gln) amidotransferase subunit B from Streptococcus pyogenes serotype M28 (strain MGAS6180).